The chain runs to 282 residues: Elongation factor Ts (282 aa).

The interval 80–83 (TDFV) is involved in Mg(2+) ion dislocation from EF-Tu.

The protein belongs to the EF-Ts family.

The protein localises to the cytoplasm. In terms of biological role, associates with the EF-Tu.GDP complex and induces the exchange of GDP to GTP. It remains bound to the aminoacyl-tRNA.EF-Tu.GTP complex up to the GTP hydrolysis stage on the ribosome. The polypeptide is Elongation factor Ts (Aliivibrio salmonicida (strain LFI1238) (Vibrio salmonicida (strain LFI1238))).